Reading from the N-terminus, the 362-residue chain is Methylthioribose-1-phosphate isomerase (362 aa).

Substrate contacts are provided by residues 53–55 (RGA), R90, and Q201. D242 (proton donor) is an active-site residue. Substrate is bound at residue 252-253 (NK).

This sequence belongs to the eIF-2B alpha/beta/delta subunits family. MtnA subfamily.

The catalysed reaction is 5-(methylsulfanyl)-alpha-D-ribose 1-phosphate = 5-(methylsulfanyl)-D-ribulose 1-phosphate. It functions in the pathway amino-acid biosynthesis; L-methionine biosynthesis via salvage pathway; L-methionine from S-methyl-5-thio-alpha-D-ribose 1-phosphate: step 1/6. Its function is as follows. Catalyzes the interconversion of methylthioribose-1-phosphate (MTR-1-P) into methylthioribulose-1-phosphate (MTRu-1-P). This chain is Methylthioribose-1-phosphate isomerase, found in Paramagnetospirillum magneticum (strain ATCC 700264 / AMB-1) (Magnetospirillum magneticum).